The primary structure comprises 427 residues: 3-phosphoshikimate 1-carboxyvinyltransferase (427 aa).

Residues lysine 22, serine 23, and arginine 27 each contribute to the 3-phosphoshikimate site. Lysine 22 lines the phosphoenolpyruvate pocket. Phosphoenolpyruvate is bound by residues glycine 96 and arginine 124. 3-phosphoshikimate contacts are provided by serine 169, serine 170, glutamine 171, serine 197, aspartate 313, asparagine 336, and lysine 340. Glutamine 171 contacts phosphoenolpyruvate. Aspartate 313 functions as the Proton acceptor in the catalytic mechanism. Arginine 344, arginine 386, and lysine 411 together coordinate phosphoenolpyruvate.

The protein belongs to the EPSP synthase family. Monomer.

It localises to the cytoplasm. It carries out the reaction 3-phosphoshikimate + phosphoenolpyruvate = 5-O-(1-carboxyvinyl)-3-phosphoshikimate + phosphate. The protein operates within metabolic intermediate biosynthesis; chorismate biosynthesis; chorismate from D-erythrose 4-phosphate and phosphoenolpyruvate: step 6/7. Functionally, catalyzes the transfer of the enolpyruvyl moiety of phosphoenolpyruvate (PEP) to the 5-hydroxyl of shikimate-3-phosphate (S3P) to produce enolpyruvyl shikimate-3-phosphate and inorganic phosphate. The chain is 3-phosphoshikimate 1-carboxyvinyltransferase from Escherichia coli O17:K52:H18 (strain UMN026 / ExPEC).